The sequence spans 468 residues: Tripartite motif-containing protein 75 (468 aa).

The RING-type zinc finger occupies 16–57 (CSICLDYLSDPVTIECGHNFCRSCIQQSWLDLQELFPCPVCR). The B box-type zinc-finger motif lies at 92-133 (EETTLCEKHNQPLSVFCKEDLMVLCPLCTQPPDHQGHHVRPI). Zn(2+) contacts are provided by Cys-97, His-100, Cys-119, and His-125. Positions 170–222 (LELREMVENQRQELSSEFEHLNQFLDREQQAVLSRLAEEEKDNQQKLSANITA) form a coiled coil. In terms of domain architecture, B30.2/SPRY spans 276 to 468 (CSFPPQYSAL…LRICTGTVCE (193 aa)).

The protein belongs to the TRIM/RBCC family.

Its subcellular location is the cytoplasm. It localises to the cytoskeleton. It is found in the spindle. In terms of biological role, may play a role in female meiosis. This is Tripartite motif-containing protein 75 from Homo sapiens (Human).